The following is a 137-amino-acid chain: Large ribosomal subunit protein uL16 (137 aa).

This sequence belongs to the universal ribosomal protein uL16 family. As to quaternary structure, part of the 50S ribosomal subunit.

In terms of biological role, binds 23S rRNA and is also seen to make contacts with the A and possibly P site tRNAs. This Agrobacterium fabrum (strain C58 / ATCC 33970) (Agrobacterium tumefaciens (strain C58)) protein is Large ribosomal subunit protein uL16.